The sequence spans 254 residues: Phosphatidylglycerol--prolipoprotein diacylglyceryl transferase (254 aa).

4 helical membrane passes run 11-31, 49-69, 84-104, and 109-129; these read LAIRWYGVVISIGAALGLLLA, FLIAFPSAIIGARLYYVIFEF, QGGLAIHGGIIFGVLAVYIYL, and ESFFEYVDVAAPSIILGQAIG. Arg-130 lines the a 1,2-diacyl-sn-glycero-3-phospho-(1'-sn-glycerol) pocket. 3 consecutive transmembrane segments (helical) span residues 169-189, 196-216, and 228-248; these read PTFLYESIWNFIVCIFLVYLL, GIVFMAYIGLYSLGRFFIEGL, and VAQLISVLGIILSIFFIYNII.

The protein belongs to the Lgt family.

It localises to the cell membrane. The catalysed reaction is L-cysteinyl-[prolipoprotein] + a 1,2-diacyl-sn-glycero-3-phospho-(1'-sn-glycerol) = an S-1,2-diacyl-sn-glyceryl-L-cysteinyl-[prolipoprotein] + sn-glycerol 1-phosphate + H(+). It participates in protein modification; lipoprotein biosynthesis (diacylglyceryl transfer). Its function is as follows. Catalyzes the transfer of the diacylglyceryl group from phosphatidylglycerol to the sulfhydryl group of the N-terminal cysteine of a prolipoprotein, the first step in the formation of mature lipoproteins. This is Phosphatidylglycerol--prolipoprotein diacylglyceryl transferase from Clostridium botulinum (strain Langeland / NCTC 10281 / Type F).